We begin with the raw amino-acid sequence, 554 residues long: Perforin-1 (554 aa).

The signal sequence occupies residues 1–20 (MATCLFLLGLFLLLPRPVPA). Intrachain disulfides connect Cys-22–Cys-75, Cys-30–Cys-72, and Cys-101–Cys-175. The 349-residue stretch at 26 to 374 (TRSECKQKHK…HYIMSRARWQ (349 aa)) folds into the MACPF domain. Residues 128-148 (WRVGLDVNPRPEANMRASVAG) form a beta stranded membrane-spanning segment. An N-linked (GlcNAc...) asparagine glycan is attached at Asn-204. 4 disulfide bridges follow: Cys-241–Cys-407, Cys-376–Cys-392, Cys-380–Cys-394, and Cys-396–Cys-406. A beta stranded transmembrane segment spans residues 256–278 (CLNVEAQVSIGAQASVSSEYKAC). An N-linked (GlcNAc...) asparagine glycan is attached at Asn-375. Residues 375 to 407 (NCSRPCRSGQHKSSHDSCQCECQDSKVTNQDCC) enclose the EGF-like domain. The region spanning 395–513 (ECQDSKVTNQ…FHEVTCELNH (119 aa)) is the C2 domain. Positions 428, 429, 432, 433, 435, 454, 467, 483, 484, 485, 488, 489, 490, and 491 each coordinate Ca(2+). Intrachain disulfides connect Cys-496/Cys-509 and Cys-524/Cys-533. Asn-548 carries an N-linked (GlcNAc...) asparagine glycan.

This sequence belongs to the complement C6/C7/C8/C9 family. In terms of assembly, monomer, as soluble protein. Homooligomer; homooligomerizes to form a pore-forming ring. Requires Ca(2+) as cofactor. N-glycosylated. The glycosylation sites are facing the interior of the pore. As to expression, detected in cytotoxic T-lymphocytes and natural killer cells.

The protein localises to the cytolytic granule. Its subcellular location is the secreted. The protein resides in the cell membrane. It is found in the endosome lumen. Functionally, pore-forming protein that plays a key role in granzyme-mediated programmed cell death, and in defense against virus-infected or neoplastic cells. Can insert into the membrane of target cells in its calcium-bound form, oligomerize and form large pores. Promotes cytolysis and apoptosis of target cells by mediating the passage and uptake of cytotoxic granzymes. Facilitates the delivery of cationic cargo protein, while anionic or neural proteins are not delivered efficiently. Perforin pores allow the release of mature caspase-7 (CASP7) into the extracellular milieu. The chain is Perforin-1 (Prf1) from Mus musculus (Mouse).